A 78-amino-acid chain; its full sequence is Small ribosomal subunit protein bS18 (78 aa).

The protein belongs to the bacterial ribosomal protein bS18 family. As to quaternary structure, part of the 30S ribosomal subunit. Forms a tight heterodimer with protein bS6.

In terms of biological role, binds as a heterodimer with protein bS6 to the central domain of the 16S rRNA, where it helps stabilize the platform of the 30S subunit. The sequence is that of Small ribosomal subunit protein bS18 from Limosilactobacillus fermentum (strain NBRC 3956 / LMG 18251) (Lactobacillus fermentum).